The chain runs to 446 residues: D(1A) dopamine receptor (446 aa).

Topologically, residues Met-1–Arg-22 are extracellular. Asn-4 carries an N-linked (GlcNAc...) asparagine glycan. The chain crosses the membrane as a helical span at residues Ile-23–Ile-48. At Arg-49 to Asn-59 the chain is on the cytoplasmic side. The chain crosses the membrane as a helical span at residues Phe-60–Ala-86. The Extracellular segment spans residues Gly-87–Cys-95. Cys-95 and Cys-186 are joined by a disulfide. A helical transmembrane segment spans residues Asn-96–Val-118. Over Asp-119–Lys-137 the chain is Cytoplasmic. A helical membrane pass occupies residues Ala-138–Trp-162. Residues His-163–Arg-192 are Extracellular-facing. Residues Thr-193–Tyr-218 traverse the membrane as a helical segment. Residues Arg-219 to Lys-272 lie on the Cytoplasmic side of the membrane. Residues Thr-273 to Gly-299 form a helical membrane-spanning segment. Over Ser-300 to Thr-312 the chain is Extracellular. Residues Phe-313–Phe-337 traverse the membrane as a helical segment. Over Gln-338–Thr-446 the chain is Cytoplasmic. S-palmitoyl cysteine attachment occurs at residues Cys-347 and Cys-351.

The protein belongs to the G-protein coupled receptor 1 family. In terms of assembly, interacts with DNAJC14 via its C-terminus PubMed:11331877. Interacts with DRD2. Interacts with DORIP1. Post-translationally, N-glycosylated. Brain, in the striatum, the nucleus accumbens, and the olfactory tubercle.

The protein resides in the cell membrane. It is found in the endoplasmic reticulum membrane. It localises to the cell projection. The protein localises to the dendrite. Its subcellular location is the cilium membrane. The protein resides in the dendritic spine. Its function is as follows. Dopamine receptor whose activity is mediated by G proteins which activate adenylyl cyclase. This Rattus norvegicus (Rat) protein is D(1A) dopamine receptor (Drd1).